Consider the following 279-residue polypeptide: Ankyrin repeat domain-containing protein 7 (279 aa).

A compositionally biased stretch (basic residues) spans Met1–Arg11. Residues Met1 to Ile25 form a disordered region. ANK repeat units follow at residues Arg80 to Val109, Glu113 to Leu142, Tyr146 to Ala175, Asp179 to Ala208, and Asn212 to His241.

This Mus musculus (Mouse) protein is Ankyrin repeat domain-containing protein 7 (Ankrd7).